The following is a 1538-amino-acid chain: Lysophospholipase nte1 (1538 aa).

Topologically, residues 1 to 74 (MATDGGPLAA…PPPTPSTMAG (74 aa)) are cytoplasmic. Residues 75 to 95 (WFGWVFSFFFQVIPSVLYWVI) traverse the membrane as a helical segment. Over 96–117 (TFATITLPTWLFTLFSMSLTFT) the chain is Lumenal. Residues 118–138 (MNFTTLLLIALAIVSTISWFI) form a helical membrane-spanning segment. Topologically, residues 139–1538 (RYRFLNMYSR…RTLAPRRASI (1400 aa)) are cytoplasmic. Disordered regions lie at residues 242-264 (KPNV…DHRV), 302-393 (EGSS…KSVH), and 529-559 (AAQS…GDLL). The segment covering 302–314 (EGSSSSASSVGPS) has biased composition (low complexity). Over residues 329–345 (GLEDSPRSNFVRDHGDS) the composition is skewed to basic and acidic residues. A nucleoside 3',5'-cyclic phosphate is bound by residues 692-811 (GGTS…QGYV) and 856-976 (RLTS…IAQR). The region spanning 1235 to 1399 (LVLGGGGARG…IDNLTVTHMK (165 aa)) is the PNPLA domain. Positions 1239-1244 (GGGARG) match the GXGXXG motif. Positions 1266-1270 (GTSIG) match the GXSXG motif. Residue Ser1268 is the Nucleophile of the active site. Catalysis depends on Asp1386, which acts as the Proton acceptor. The DGA/G signature appears at 1386–1388 (DGG). The tract at residues 1517-1538 (LPEETEEKKKLQRTLAPRRASI) is disordered.

It belongs to the NTE family.

It is found in the endoplasmic reticulum membrane. It carries out the reaction a 1-acyl-sn-glycero-3-phosphocholine + H2O = sn-glycerol 3-phosphocholine + a fatty acid + H(+). Its activity is regulated as follows. Inhibited by organophosphorus esters. Intracellular phospholipase B that catalyzes the double deacylation of phosphatidylcholine (PC) to glycerophosphocholine (GroPCho). Plays an important role in membrane lipid homeostasis. Responsible for the rapid PC turnover in response to inositol, elevated temperatures, or when choline is present in the growth medium. The protein is Lysophospholipase nte1 (nte1) of Aspergillus oryzae (strain ATCC 42149 / RIB 40) (Yellow koji mold).